The chain runs to 229 residues: GTP cyclohydrolase 1 (229 aa).

The interval 1–31 is disordered; that stretch reads MFRESDNTIAPSNQDLNKPVVDKEQPAERTP. The span at 7-16 shows a compositional bias: polar residues; sequence NTIAPSNQDL. Positions 117, 120, and 188 each coordinate Zn(2+).

It belongs to the GTP cyclohydrolase I family. As to quaternary structure, toroid-shaped homodecamer, composed of two pentamers of five dimers.

It carries out the reaction GTP + H2O = 7,8-dihydroneopterin 3'-triphosphate + formate + H(+). Its pathway is cofactor biosynthesis; 7,8-dihydroneopterin triphosphate biosynthesis; 7,8-dihydroneopterin triphosphate from GTP: step 1/1. The sequence is that of GTP cyclohydrolase 1 from Rhodopirellula baltica (strain DSM 10527 / NCIMB 13988 / SH1).